The primary structure comprises 387 residues: 1-deoxy-D-xylulose 5-phosphate reductoisomerase (387 aa).

NADPH contacts are provided by T10, G11, S12, V13, N38, and N119. Residue K120 coordinates 1-deoxy-D-xylulose 5-phosphate. E121 provides a ligand contact to NADPH. D145 serves as a coordination point for Mn(2+). Residues S146, E147, S170, and H193 each contribute to the 1-deoxy-D-xylulose 5-phosphate site. E147 is a Mn(2+) binding site. Residue G199 coordinates NADPH. Residues S206, N211, K212, and E215 each contribute to the 1-deoxy-D-xylulose 5-phosphate site. Mn(2+) is bound at residue E215.

Belongs to the DXR family. The cofactor is Mg(2+). Mn(2+) serves as cofactor.

It carries out the reaction 2-C-methyl-D-erythritol 4-phosphate + NADP(+) = 1-deoxy-D-xylulose 5-phosphate + NADPH + H(+). It participates in isoprenoid biosynthesis; isopentenyl diphosphate biosynthesis via DXP pathway; isopentenyl diphosphate from 1-deoxy-D-xylulose 5-phosphate: step 1/6. In terms of biological role, catalyzes the NADPH-dependent rearrangement and reduction of 1-deoxy-D-xylulose-5-phosphate (DXP) to 2-C-methyl-D-erythritol 4-phosphate (MEP). The protein is 1-deoxy-D-xylulose 5-phosphate reductoisomerase of Wolbachia pipientis wMel.